Consider the following 287-residue polypeptide: Probable endonuclease 4 (287 aa).

His69, His109, Glu144, Asp178, His181, His215, Asp228, His230, and Glu260 together coordinate Zn(2+).

The protein belongs to the AP endonuclease 2 family. Zn(2+) serves as cofactor.

The catalysed reaction is Endonucleolytic cleavage to 5'-phosphooligonucleotide end-products.. Functionally, endonuclease IV plays a role in DNA repair. It cleaves phosphodiester bonds at apurinic or apyrimidinic (AP) sites, generating a 3'-hydroxyl group and a 5'-terminal sugar phosphate. The sequence is that of Probable endonuclease 4 from Thermotoga maritima (strain ATCC 43589 / DSM 3109 / JCM 10099 / NBRC 100826 / MSB8).